A 288-amino-acid chain; its full sequence is Bifunctional protein FolD (288 aa).

Residues 164-166, Ser-193, and Ile-234 contribute to the NADP(+) site; that span reads GRS.

This sequence belongs to the tetrahydrofolate dehydrogenase/cyclohydrolase family. Homodimer.

It catalyses the reaction (6R)-5,10-methylene-5,6,7,8-tetrahydrofolate + NADP(+) = (6R)-5,10-methenyltetrahydrofolate + NADPH. It carries out the reaction (6R)-5,10-methenyltetrahydrofolate + H2O = (6R)-10-formyltetrahydrofolate + H(+). The protein operates within one-carbon metabolism; tetrahydrofolate interconversion. Functionally, catalyzes the oxidation of 5,10-methylenetetrahydrofolate to 5,10-methenyltetrahydrofolate and then the hydrolysis of 5,10-methenyltetrahydrofolate to 10-formyltetrahydrofolate. The polypeptide is Bifunctional protein FolD (Nitratidesulfovibrio vulgaris (strain DSM 19637 / Miyazaki F) (Desulfovibrio vulgaris)).